Consider the following 298-residue polypeptide: Palmitoyl-protein thioesterase 1 (298 aa).

Residues M1–A16 form the signal peptide. Residue N20 is glycosylated (N-linked (GlcNAc...) asparagine). 3 disulfides stabilise this stretch: C37–C38, C88–C120, and C144–C151. S107 functions as the Nucleophile in the catalytic mechanism. D224 is a catalytic residue. Residue N250 is glycosylated (N-linked (GlcNAc...) asparagine). H280 is an active-site residue.

Belongs to the palmitoyl-protein thioesterase family.

It catalyses the reaction S-hexadecanoyl-L-cysteinyl-[protein] + H2O = L-cysteinyl-[protein] + hexadecanoate + H(+). In terms of biological role, removes thioester-linked fatty acyl groups such as palmitate (hexadecanoate) from modified cysteine residues in proteins or peptides. This is Palmitoyl-protein thioesterase 1 (ppt-1) from Caenorhabditis elegans.